Reading from the N-terminus, the 108-residue chain is Colipase B (108 aa).

The N-terminal stretch at 1–13 is a signal peptide; the sequence is LALLLVALAVAYA. Positions 14–18 are cleaved as a propeptide — enterostatin, activation peptide; that stretch reads VPDPR. 5 disulfide bridges follow: Cys-30/Cys-41, Cys-36/Cys-52, Cys-40/Cys-74, Cys-62/Cys-82, and Cys-76/Cys-100. Trp-65 lines the taurodeoxycholate pocket.

This sequence belongs to the colipase family. Forms a 1:1 stoichiometric complex with pancreatic lipase. As to expression, expressed by the pancreas.

It is found in the secreted. Colipase is a cofactor of pancreatic lipase. It allows the lipase to anchor itself to the lipid-water interface. Without colipase the enzyme is washed off by bile salts, which have an inhibitory effect on the lipase. In terms of biological role, enterostatin has a biological activity as a satiety signal. This is Colipase B (CLPS2) from Equus caballus (Horse).